A 314-amino-acid chain; its full sequence is uncharacterized protein (314 aa).

A signal peptide spans 1 to 26 (MRGRVAGSCAPLGLLLVCLRLPGLFA). Residues 41–60 (GTNLPQLGQPSLTGPPNSEH) are compositionally biased toward polar residues. 4 disordered regions span residues 41–65 (GTNL…QPAL), 77–96 (LKLS…SAVQ), 147–191 (GSGP…GKIL), and 292–314 (PPGS…LQWG). Residues 147–157 (GSGPLPGESSP) are compositionally biased toward low complexity. Over residues 167-177 (SHLHQDSESRR) the composition is skewed to basic and acidic residues. Residues 303–314 (FPNPPSPGLQWG) are compositionally biased toward pro residues.

In terms of assembly, binds to numerous extracellular matrix proteins. Taste cell specific.

The protein localises to the secreted. It is found in the extracellular space. The protein resides in the extracellular matrix. This is an uncharacterized protein from Macaca mulatta (Rhesus macaque).